Here is a 509-residue protein sequence, read N- to C-terminus: Steroid 17-alpha-hydroxylase/17,20 lyase (509 aa).

Asn202 lines the substrate pocket. Residue Cys442 participates in heme binding.

Belongs to the cytochrome P450 family. It depends on heme as a cofactor.

It is found in the endoplasmic reticulum membrane. The protein localises to the microsome membrane. The enzyme catalyses a C21-steroid + reduced [NADPH--hemoprotein reductase] + O2 = a 17alpha-hydroxy-C21-steroid + oxidized [NADPH--hemoprotein reductase] + H2O + H(+). It carries out the reaction progesterone + reduced [NADPH--hemoprotein reductase] + O2 = 17alpha-hydroxyprogesterone + oxidized [NADPH--hemoprotein reductase] + H2O + H(+). It catalyses the reaction pregnenolone + reduced [NADPH--hemoprotein reductase] + O2 = 17alpha-hydroxypregnenolone + oxidized [NADPH--hemoprotein reductase] + H2O + H(+). The catalysed reaction is 17alpha-hydroxyprogesterone + reduced [NADPH--hemoprotein reductase] + O2 = androst-4-ene-3,17-dione + acetate + oxidized [NADPH--hemoprotein reductase] + H2O + 2 H(+). The enzyme catalyses 17alpha-hydroxyprogesterone + reduced [NADPH--hemoprotein reductase] + O2 = 16alpha,17alpha-dihydroxyprogesterone + oxidized [NADPH--hemoprotein reductase] + H2O + H(+). It carries out the reaction 16alpha,17alpha-dihydroxyprogesterone + reduced [NADPH--hemoprotein reductase] + O2 = 6beta,16alpha,17alpha-trihydroxyprogesterone + oxidized [NADPH--hemoprotein reductase] + H2O + H(+). It catalyses the reaction 17alpha-hydroxypregnenolone + reduced [NADPH--hemoprotein reductase] + O2 = 3beta-hydroxyandrost-5-en-17-one + acetate + oxidized [NADPH--hemoprotein reductase] + H2O + 2 H(+). The catalysed reaction is 16alpha,17alpha-dihydroxypregnenolone + reduced [NADPH--hemoprotein reductase] + O2 = 3beta,16alpha-dihydroxy-androst-5-en-17-one + acetate + oxidized [NADPH--hemoprotein reductase] + H2O + 2 H(+). The enzyme catalyses 3beta-hydroxyandrost-5-en-17-one + reduced [NADPH--hemoprotein reductase] + O2 = 3beta,16alpha-dihydroxy-androst-5-en-17-one + oxidized [NADPH--hemoprotein reductase] + H2O + H(+). It carries out the reaction androst-4-ene-3,17-dione + reduced [NADPH--hemoprotein reductase] + O2 = 16alpha-hydroxyandrost-4-ene-3,17-dione + oxidized [NADPH--hemoprotein reductase] + H2O + H(+). The protein operates within steroid hormone biosynthesis. It participates in steroid biosynthesis; glucocorticoid biosynthesis. Its activity is regulated as follows. Regulated predominantly by intracellular cAMP levels. The 17,20-lyase activity is stimulated by cytochrome b5, which acts as an allosteric effector increasing the Vmax of the lyase activity. Functionally, a cytochrome P450 monooxygenase involved in corticoid and androgen biosynthesis. Catalyzes 17-alpha hydroxylation of C21 steroids, which is common for both pathways. A second oxidative step, required only for androgen synthesis, involves an acyl-carbon cleavage. The 17-alpha hydroxy intermediates, as part of adrenal glucocorticoids biosynthesis pathway, are precursors of cortisol. Hydroxylates steroid hormones, pregnenolone and progesterone to form 17-alpha hydroxy metabolites, followed by the cleavage of the C17-C20 bond to form C19 steroids, dehydroepiandrosterone (DHEA) and androstenedione. Has 16-alpha hydroxylase activity. Catalyzes 16-alpha hydroxylation of 17-alpha hydroxy pregnenolone, followed by the cleavage of the C17-C20 bond to form 16-alpha-hydroxy DHEA. Also 16-alpha hydroxylates androgens, relevant for estriol synthesis. Mechanistically, uses molecular oxygen inserting one oxygen atom into a substrate, and reducing the second into a water molecule, with two electrons provided by NADPH via cytochrome P450 reductase (CPR; NADPH-ferrihemoprotein reductase). This chain is Steroid 17-alpha-hydroxylase/17,20 lyase (CYP17A1), found in Sus scrofa (Pig).